Consider the following 364-residue polypeptide: MYLKEIFVDNFRNLKKQKLEFCEGVNLIYGLNAQGKSNLLEAIRLLSMGRSFRGSKMSELVKFDEEYFYVRGLVRSADFYEKKIEFGYKVNGNKVIKVNGNKLKSTGEILGHFLTVIFSPEDIEIIKEGPSRRRKYLDACISVIDKNYFFDLLQYNKTLSNRNSLLKKIKEEGKGEDLLEIFDEKLAEYGARIIKVRNNYLEKLKNSMSKFLMEISNEKLEIIYLNSAGVKEVHEENLIREKLKNRLTKSLTLDLKYLSTQVGPHREDFKILINGYDSRVYSSQGQKRTAALCLKLSELEILEEETGEKPVLLLDDVMSELDDNRKKYILKKLEGFQSFITHTSKSDVEGDCCFKIYDGIVMRE.

30–37 lines the ATP pocket; that stretch reads GLNAQGKS.

It belongs to the RecF family.

The protein resides in the cytoplasm. The RecF protein is involved in DNA metabolism; it is required for DNA replication and normal SOS inducibility. RecF binds preferentially to single-stranded, linear DNA. It also seems to bind ATP. This is DNA replication and repair protein RecF from Caldanaerobacter subterraneus subsp. tengcongensis (strain DSM 15242 / JCM 11007 / NBRC 100824 / MB4) (Thermoanaerobacter tengcongensis).